The following is an 86-amino-acid chain: Insulin-related peptide 2 (86 aa).

The first 19 residues, 1 to 19, serve as a signal peptide directing secretion; that stretch reads MKFYIVFALILACAACVSS. A propeptide spanning residues 20-43 is cleaved from the precursor; it reads QEGTNFYCGRQLSRTLALVCWGAE. Arg63 carries the arginine amide modification. Residues 67–86 constitute a propeptide that is removed on maturation; sequence GPVDECCLKPCSIEEMLTYC.

It belongs to the insulin family. DAGWWVPPQSARALGGGR-amide: Expressed in corpora cardiaca (CC), corpora allata (CA), antennal lobe (AL) and gnathal ganglion (GNG) (at protein level). Expression in CC and CA detected in most animals, in AL in some animals and in GNG in few animals (at protein level).

Its subcellular location is the secreted. This is Insulin-related peptide 2 from Agrotis ipsilon (Black cutworm moth).